The following is a 984-amino-acid chain: Putative formate dehydrogenase SAB2186c (984 aa).

A 2Fe-2S ferredoxin-type domain is found at 3–79 (EHLVVTLDGK…PMTVNTVNND (77 aa)). The [2Fe-2S] cluster site is built by C37, C48, C51, and C63. One can recognise a 4Fe-4S His(Cys)3-ligated-type domain in the interval 79-119 (DVKDAQKEALDRILEKHMLYCTVCDYNNGDCEIHNTMDAWG). H95, C99, C102, C109, C147, C150, C153, C157, C190, C193, C196, C200, C264, C267, C271, and C299 together coordinate [4Fe-4S] cluster. 4Fe-4S ferredoxin-type domains follow at residues 138–165 (PFYR…VNET) and 181–211 (NDVP…VNME). Residues 252 to 984 (MRKERIKKTK…YVFPGNQVDK (733 aa)) are formate dehydrogenase. The region spanning 257–313 (IKKTKTVCTYCGVGCSFEVWTKDREILKVQPSHDSPANKIATCVKGKFSWGHINSDQ) is the 4Fe-4S Mo/W bis-MGD-type domain.

The protein in the C-terminal section; belongs to the prokaryotic molybdopterin-containing oxidoreductase family. It depends on [2Fe-2S] cluster as a cofactor. [4Fe-4S] cluster serves as cofactor. Requires Mo-bis(molybdopterin guanine dinucleotide) as cofactor.

It carries out the reaction formate + NAD(+) = CO2 + NADH. This Staphylococcus aureus (strain bovine RF122 / ET3-1) protein is Putative formate dehydrogenase SAB2186c.